Consider the following 388-residue polypeptide: LL-diaminopimelate aminotransferase (388 aa).

Residues Tyr13, Gly38, Lys102, Tyr126, and Asn176 each coordinate substrate. Pyridoxal 5'-phosphate-binding positions include 101-102 (SK), Tyr126, Asn176, Tyr207, and 235-237 (SLS). Lys238 is modified (N6-(pyridoxal phosphate)lysine). Residue Arg246 participates in pyridoxal 5'-phosphate binding. Residue Arg364 coordinates substrate.

Belongs to the class-I pyridoxal-phosphate-dependent aminotransferase family. LL-diaminopimelate aminotransferase subfamily. Homodimer. The cofactor is pyridoxal 5'-phosphate.

The enzyme catalyses (2S,6S)-2,6-diaminopimelate + 2-oxoglutarate = (S)-2,3,4,5-tetrahydrodipicolinate + L-glutamate + H2O + H(+). It functions in the pathway amino-acid biosynthesis; L-lysine biosynthesis via DAP pathway; LL-2,6-diaminopimelate from (S)-tetrahydrodipicolinate (aminotransferase route): step 1/1. Involved in the synthesis of meso-diaminopimelate (m-DAP or DL-DAP), required for both lysine and peptidoglycan biosynthesis. Catalyzes the direct conversion of tetrahydrodipicolinate to LL-diaminopimelate. In Dehalococcoides mccartyi (strain CBDB1), this protein is LL-diaminopimelate aminotransferase.